A 354-amino-acid polypeptide reads, in one-letter code: Cysteine and histidine-rich domain-containing protein morgana (354 aa).

The Zn(2+) site is built by cysteine 4, cysteine 9, cysteine 23, histidine 26, cysteine 41, cysteine 42, cysteine 58, histidine 63, cysteine 140, cysteine 145, cysteine 159, histidine 162, cysteine 177, cysteine 178, cysteine 194, and histidine 199. CHORD domains are found at residues 4–63 (CYNR…LAKH) and 140–199 (CKNN…YGEH). Positions 210-301 (VVQCRYDWHQ…LEPGSWSNLN (92 aa)) constitute a CS domain. Phosphoserine is present on residues serine 324 and serine 339.

Interacts with Hsp83.

The protein resides in the cytoplasm. It localises to the nucleus. It is found in the cytoskeleton. Its subcellular location is the spindle. Its function is as follows. Regulates centrosome duplication and mitotic spindle dynamics. Also involved in controlling the size of dendritic arbors. May act as co-chaperone for Hsp83. During mitotic spindle assembly, regulates microtubule (MT) dynamics by binding to MTs and promoting MT polymerisation. Promotes the elongation and retraction of terminal branches in response to changes in body size, possibly acting downstream of the TORC2 pathway to enable proportional scaling of dendritic arbors. The polypeptide is Cysteine and histidine-rich domain-containing protein morgana (Drosophila melanogaster (Fruit fly)).